We begin with the raw amino-acid sequence, 171 residues long: SPbeta prophage-derived uncharacterized protein YokC (171 aa).

The polypeptide is SPbeta prophage-derived uncharacterized protein YokC (yokC) (Bacillus subtilis (strain 168)).